The following is a 223-amino-acid chain: Ras-related protein RABA4c (223 aa).

A GTP-binding site is contributed by 22–29 (GDSAVGKS). The Effector region motif lies at 44–52 (SKATIGVEF). GTP is bound by residues 70–74 (DTAGQ), 128–131 (NKTD), and 158–159 (SA). Residues C219 and C220 are each lipidated (S-geranylgeranyl cysteine).

The protein belongs to the small GTPase superfamily. Rab family.

It is found in the cell membrane. Intracellular vesicle trafficking and protein transport. The sequence is that of Ras-related protein RABA4c (RABA4C) from Arabidopsis thaliana (Mouse-ear cress).